The chain runs to 201 residues: uncharacterized protein (201 aa).

Residues 11–31 (IWKSLYLLIIVGMLYIGYILI) form a helical membrane-spanning segment.

It localises to the membrane. This is an uncharacterized protein from Rickettsia prowazekii (strain Madrid E).